The chain runs to 382 residues: SAT4 family membrane protein (382 aa).

The disordered stretch occupies residues 1–22 (MFGAELVGRETGGQSTDQPYSY). Asn-78 is a glycosylation site (N-linked (GlcNAc...) asparagine). 2 consecutive transmembrane segments (helical) span residues 80-100 (SQIL…LLYL) and 112-132 (YLSI…NFFL). A glycan (N-linked (GlcNAc...) asparagine) is linked at Asn-147. 3 helical membrane-spanning segments follow: residues 159–179 (ILVT…LPII), 192–212 (LGIS…IMRL), and 228–248 (WYTE…PTFF). An N-linked (GlcNAc...) asparagine glycan is attached at Asn-269.

This sequence belongs to the SAT4 family.

The protein localises to the membrane. This is SAT4 family membrane protein from Emericella nidulans (strain FGSC A4 / ATCC 38163 / CBS 112.46 / NRRL 194 / M139) (Aspergillus nidulans).